The sequence spans 104 residues: COX assembly mitochondrial protein 1 (104 aa).

One can recognise a CHCH domain in the interval 10 to 52 (QKQCADLIRALEECHKSFGKFFGECNTIKYELKACLTKDRNDK). 2 short sequence motifs (cx9C motif) span residues 13 to 23 (CADLIRALEEC) and 34 to 44 (CNTIKYELKAC). 2 disulfides stabilise this stretch: Cys-13–Cys-44 and Cys-23–Cys-34.

Belongs to the CMC family.

It is found in the mitochondrion inner membrane. Required for mitochondrial cytochrome c oxidase (COX) assembly and respiration. The chain is COX assembly mitochondrial protein 1 (cmc1) from Schizosaccharomyces pombe (strain 972 / ATCC 24843) (Fission yeast).